A 268-amino-acid polypeptide reads, in one-letter code: Octanoyltransferase (268 aa).

The region spanning 73 to 261 (GEADELVWLL…AFEEVFGPAV (189 aa)) is the BPL/LPL catalytic domain. Residues 112 to 119 (RGGEYTYH), 192 to 194 (ALG), and 205 to 207 (GLS) each bind substrate. The Acyl-thioester intermediate role is filled by cysteine 223.

The protein belongs to the LipB family.

Its subcellular location is the cytoplasm. It carries out the reaction octanoyl-[ACP] + L-lysyl-[protein] = N(6)-octanoyl-L-lysyl-[protein] + holo-[ACP] + H(+). It participates in protein modification; protein lipoylation via endogenous pathway; protein N(6)-(lipoyl)lysine from octanoyl-[acyl-carrier-protein]: step 1/2. In terms of biological role, catalyzes the transfer of endogenously produced octanoic acid from octanoyl-acyl-carrier-protein onto the lipoyl domains of lipoate-dependent enzymes. Lipoyl-ACP can also act as a substrate although octanoyl-ACP is likely to be the physiological substrate. This chain is Octanoyltransferase, found in Agrobacterium fabrum (strain C58 / ATCC 33970) (Agrobacterium tumefaciens (strain C58)).